Reading from the N-terminus, the 118-residue chain is Small ribosomal subunit protein uS13 (118 aa).

Residues 94-118 (SLPLRGQRTKTNARTRKGPRKAIKK) form a disordered region.

This sequence belongs to the universal ribosomal protein uS13 family. In terms of assembly, part of the 30S ribosomal subunit. Forms a loose heterodimer with protein S19. Forms two bridges to the 50S subunit in the 70S ribosome.

Its function is as follows. Located at the top of the head of the 30S subunit, it contacts several helices of the 16S rRNA. In the 70S ribosome it contacts the 23S rRNA (bridge B1a) and protein L5 of the 50S subunit (bridge B1b), connecting the 2 subunits; these bridges are implicated in subunit movement. Contacts the tRNAs in the A and P-sites. The sequence is that of Small ribosomal subunit protein uS13 from Pseudoalteromonas atlantica (strain T6c / ATCC BAA-1087).